Consider the following 131-residue polypeptide: Large ribosomal subunit protein bL17 (131 aa).

This sequence belongs to the bacterial ribosomal protein bL17 family. Part of the 50S ribosomal subunit. Contacts protein L32.

The protein is Large ribosomal subunit protein bL17 of Finegoldia magna (strain ATCC 29328 / DSM 20472 / WAL 2508) (Peptostreptococcus magnus).